Reading from the N-terminus, the 223-residue chain is Small ribosomal subunit protein uS3 (223 aa).

The 70-residue stretch at 39 to 108 folds into the KH type-2 domain; it reads IRNFVKKNSY…NILINIVEVK (70 aa).

Belongs to the universal ribosomal protein uS3 family. Part of the 30S ribosomal subunit. Forms a tight complex with proteins S10 and S14.

In terms of biological role, binds the lower part of the 30S subunit head. Binds mRNA in the 70S ribosome, positioning it for translation. The protein is Small ribosomal subunit protein uS3 of Clostridium botulinum (strain Hall / ATCC 3502 / NCTC 13319 / Type A).